Reading from the N-terminus, the 367-residue chain is Developmentally-regulated GTP-binding protein 1 (367 aa).

The required for interaction with STK16 stretch occupies residues 2–16 (SGTLARIAEIEAEMA). The OBG-type G domain occupies 65 to 290 (ARIGFVGFPS…LLEKIWDYLQ (226 aa)). Residues 71-78 (GFPSVGKS), 96-100 (FTTLT), 117-120 (DLPG), 248-251 (NKID), and 271-273 (SAH) contribute to the GTP site. Mg(2+)-binding residues include Ser-78 and Thr-98. The 77-residue stretch at 290–366 (QLVRIYTKPK…EDEDVIQIVK (77 aa)) folds into the TGS domain.

It belongs to the TRAFAC class OBG-HflX-like GTPase superfamily. OBG GTPase family. Mg(2+) is required as a cofactor. It depends on K(+) as a cofactor. As to expression, expressed in many adult amd embryonic tissues. In adults, highest levels in ovaries and testes, followed by skeletal muscle, stomach, brain, kidney and liver. Weak expression in heart and brain.

The protein resides in the nucleus. It is found in the cytoplasm. The enzyme catalyses GTP + H2O = GDP + phosphate + H(+). Its function is as follows. Catalyzes the conversion of GTP to GDP through hydrolysis of the gamma-phosphate bond in GTP. Binds to microtubules and promotes microtubule polymerization and bundling. GTPase activity is not necessary for these microtubule-related functions. This is Developmentally-regulated GTP-binding protein 1 (drg1) from Xenopus laevis (African clawed frog).